Consider the following 471-residue polypeptide: A-type ATP synthase subunit B (471 aa).

The protein belongs to the ATPase alpha/beta chains family. Has multiple subunits with at least A(3), B(3), C, D, E, F, H, I and proteolipid K(x).

Its subcellular location is the cell membrane. Component of the A-type ATP synthase that produces ATP from ADP in the presence of a proton gradient across the membrane. The B chain is a regulatory subunit. The sequence is that of A-type ATP synthase subunit B from Ignicoccus hospitalis (strain KIN4/I / DSM 18386 / JCM 14125).